A 360-amino-acid polypeptide reads, in one-letter code: Peptide chain release factor 1 (360 aa).

At Gln237 the chain carries N5-methylglutamine.

This sequence belongs to the prokaryotic/mitochondrial release factor family. In terms of processing, methylated by PrmC. Methylation increases the termination efficiency of RF1.

The protein localises to the cytoplasm. Peptide chain release factor 1 directs the termination of translation in response to the peptide chain termination codons UAG and UAA. This is Peptide chain release factor 1 from Azotobacter vinelandii (strain DJ / ATCC BAA-1303).